Consider the following 113-residue polypeptide: Urease subunit beta (113 aa).

It belongs to the urease beta subunit family. As to quaternary structure, heterotrimer of UreA (gamma), UreB (beta) and UreC (alpha) subunits. Three heterotrimers associate to form the active enzyme.

The protein resides in the cytoplasm. It catalyses the reaction urea + 2 H2O + H(+) = hydrogencarbonate + 2 NH4(+). Its pathway is nitrogen metabolism; urea degradation; CO(2) and NH(3) from urea (urease route): step 1/1. The sequence is that of Urease subunit beta from Nitrosospira multiformis (strain ATCC 25196 / NCIMB 11849 / C 71).